Consider the following 190-residue polypeptide: Peptidyl-tRNA hydrolase (190 aa).

TRNA is bound at residue Tyr18. The active-site Proton acceptor is His23. Phe65, Asn67, and Asn113 together coordinate tRNA.

It belongs to the PTH family. As to quaternary structure, monomer.

It is found in the cytoplasm. The enzyme catalyses an N-acyl-L-alpha-aminoacyl-tRNA + H2O = an N-acyl-L-amino acid + a tRNA + H(+). Hydrolyzes ribosome-free peptidyl-tRNAs (with 1 or more amino acids incorporated), which drop off the ribosome during protein synthesis, or as a result of ribosome stalling. Functionally, catalyzes the release of premature peptidyl moieties from peptidyl-tRNA molecules trapped in stalled 50S ribosomal subunits, and thus maintains levels of free tRNAs and 50S ribosomes. This Akkermansia muciniphila (strain ATCC BAA-835 / DSM 22959 / JCM 33894 / BCRC 81048 / CCUG 64013 / CIP 107961 / Muc) protein is Peptidyl-tRNA hydrolase.